A 299-amino-acid chain; its full sequence is N-acetylmuramic acid 6-phosphate etherase (299 aa).

The 164-residue stretch at 57–220 (ISAAFHKKGR…TTGAMIRTGK (164 aa)) folds into the SIS domain. The active-site Proton donor is the Glu85. Residue Glu116 is part of the active site.

It belongs to the GCKR-like family. MurNAc-6-P etherase subfamily. Homodimer.

The catalysed reaction is N-acetyl-D-muramate 6-phosphate + H2O = N-acetyl-D-glucosamine 6-phosphate + (R)-lactate. The protein operates within amino-sugar metabolism; 1,6-anhydro-N-acetylmuramate degradation. It functions in the pathway amino-sugar metabolism; N-acetylmuramate degradation. Its pathway is cell wall biogenesis; peptidoglycan recycling. Its function is as follows. Specifically catalyzes the cleavage of the D-lactyl ether substituent of MurNAc 6-phosphate, producing GlcNAc 6-phosphate and D-lactate. Together with AnmK, is also required for the utilization of anhydro-N-acetylmuramic acid (anhMurNAc) either imported from the medium or derived from its own cell wall murein, and thus plays a role in cell wall recycling. This is N-acetylmuramic acid 6-phosphate etherase from Psychromonas ingrahamii (strain DSM 17664 / CCUG 51855 / 37).